We begin with the raw amino-acid sequence, 241 residues long: Peroxisomal membrane protein 11C (241 aa).

Over Met1–Arg124 the chain is Cytoplasmic. Residues Trp125–Leu149 form a helical membrane-spanning segment. The Lumenal segment spans residues Lys150 to Pro211. A helical membrane pass occupies residues Trp212 to Tyr227. At Gln228–Pro241 the chain is on the cytoplasmic side.

It belongs to the peroxin-11 family. In terms of assembly, homodimer. Heterodimer with either PEX11A or PEX11B. Interacts with FIS1.

It localises to the peroxisome membrane. Promotes membrane protrusion and elongation on the peroxisomal surface. The sequence is that of Peroxisomal membrane protein 11C (PEX11G) from Homo sapiens (Human).